Consider the following 124-residue polypeptide: Small ribosomal subunit protein uS12 (124 aa).

Residues 1 to 32 (MPTIQQLVRKGRKDKATKTKTPALKGSPQRRG) form a disordered region. Asp-89 carries the 3-methylthioaspartic acid modification. The disordered stretch occupies residues 105–124 (QGVRGRQQARSRYGAKKEKK). Over residues 111-124 (QQARSRYGAKKEKK) the composition is skewed to basic residues.

This sequence belongs to the universal ribosomal protein uS12 family. In terms of assembly, part of the 30S ribosomal subunit. Contacts proteins S8 and S17. May interact with IF1 in the 30S initiation complex.

With S4 and S5 plays an important role in translational accuracy. Functionally, interacts with and stabilizes bases of the 16S rRNA that are involved in tRNA selection in the A site and with the mRNA backbone. Located at the interface of the 30S and 50S subunits, it traverses the body of the 30S subunit contacting proteins on the other side and probably holding the rRNA structure together. The combined cluster of proteins S8, S12 and S17 appears to hold together the shoulder and platform of the 30S subunit. The polypeptide is Small ribosomal subunit protein uS12 (Beutenbergia cavernae (strain ATCC BAA-8 / DSM 12333 / CCUG 43141 / JCM 11478 / NBRC 16432 / NCIMB 13614 / HKI 0122)).